The following is a 305-amino-acid chain: Insulin-like peptide (305 aa).

An N-terminal signal peptide occupies residues 1–22; sequence MNLSSVYVLASLAVVCLLVKET. 3 disulfides stabilise this stretch: C28-C87, C40-C100, and C86-C91. Residues 52–76 constitute a propeptide, connecting peptide; that stretch reads SVSKRAIDFISEQQAKDYMGAMPHI. Residues 102 to 114 are d; sequence PYSTAPATATPVR. Residues 102–305 constitute a propeptide, d/E peptide; sequence PYSTAPATAT…RDSYHLTELR (204 aa). Positions 107–118 are enriched in low complexity; that stretch reads PATATPVRTTEP. 2 disordered regions span residues 107–130 and 236–305; these read PATA…PLDG and HNQT…TELR. The e stretch occupies residues 115-305; it reads TTEPQPEEAE…RDSYHLTELR (191 aa). The segment covering 119 to 128 has biased composition (acidic residues); it reads QPEEAEDDPL. Basic and acidic residues-rich tracts occupy residues 236–245 and 291–305; these read HNQTDKKEPT and RRIE…TELR.

Belongs to the insulin family.

It is found in the secreted. This Branchiostoma californiense (California lancelet) protein is Insulin-like peptide (ILP).